A 457-amino-acid chain; its full sequence is MSTDTSQVKVKFFTREKDESLHVDDVPMYAPISLKRYGLSEIVNHLLESETPIPFDFLIDGELLRTSLQEYLTKKGLSSETTLTVEYTRAVLPPSFLANFNNDDWVSALDVSDDFRHIYSGSYDGVVRTWNMSGKVEKQYSGHTGAVKAVKYISNTRIVSAGNDRSLRLWKTKNDDGSVSNNTGDENDEENIEDGKTLAILEGHKAPVVSLDVASNSRILSASYDNTVALWSTIYKEMTAIDHLEEIQNPNNKISTAAKKRRKLTLKDGTIRRRAPLSLLESHTGPVEQVIFDHGDNTVGYSVSQDHTIKTWDLVTARCIDTKTTSYPLLSIAQMPTLNLLACGSSVRHITLHDPRVSSSAKITQKQLVGHKNFVVGLDTCSENEYLLCSASHDGTVKVWDVRSTSPMYTITRQDPTVEKGVNDKVFAVKWAKSIGIISGGQDKKIQINKGDNIFKN.

The tract at residues 8 to 89 (VKVKFFTREK…ETTLTVEYTR (82 aa)) is ubiquitin-like (UBL) domain. Residues 99–457 (NFNNDDWVSA…INKGDNIFKN (359 aa)) form a sufficient for interaction with ERB1 and association with 66S pre-ribosomes region. WD repeat units lie at residues 101–140 (NNDDWVSALDVSDDFRHIYSGSYDGVVRTWNMSGKVEKQY), 142–180 (GHTGAVKAVKYISNTRIVSAGNDRSLRLWKTKNDDGSVS), 203–241 (GHKAPVVSLDVASNSRILSASYDNTVALWSTIYKEMTAI), 282–322 (SHTG…CIDT), 324–363 (TTSYPLLSIAQMPTLNLLACGSSVRHITLHDPRVSSSAKI), 370–410 (GHKN…PMYT), and 421–457 (GVNDKVFAVKWAKSIGIISGGQDKKIQINKGDNIFKN). The disordered stretch occupies residues 172-191 (TKNDDGSVSNNTGDENDEEN).

Belongs to the WD repeat WDR12/YTM1 family. Component of the NOP7 complex, composed of ERB1, NOP7 and YTM1. The complex is held together by ERB1, which interacts with NOP7 via its N-terminal domain and with YTM1 via a high-affinity interaction between the seven-bladed beta-propeller domains of the 2 proteins. The NOP7 complex associates with the 66S pre-ribosome. Interacts (via UBL domain) with MDN1 (via VWFA/MIDAS domain).

It is found in the nucleus. Its subcellular location is the nucleolus. The protein localises to the nucleoplasm. Component of the NOP7 complex, which is required for maturation of the 25S and 5.8S ribosomal RNAs and formation of the 60S ribosome. This Candida glabrata (strain ATCC 2001 / BCRC 20586 / JCM 3761 / NBRC 0622 / NRRL Y-65 / CBS 138) (Yeast) protein is Ribosome biogenesis protein YTM1.